Consider the following 207-residue polypeptide: MIVSIAGKLVQVGEISVIIQAAPFDYEVYVGDYTRRQLQNQIGNEVRLHTLDYIEGNAQGGRLTPRLIGFSTLPERQFFDLFCSVDGVGVKKALRAMVRPVKELAVLIEEQDAKTLSALPGIGPATSEKVIAKLRRKMPRFALMVAGGEVADAMEVESPIVSDTYDALVTLGHSESDARKLIDETLATGKKFKDTESLLTAIYQRSK.

A domain I region spans residues 1-71 (MIVSIAGKLV…RLTPRLIGFS (71 aa)). The interval 72 to 149 (TLPERQFFDL…RFALMVAGGE (78 aa)) is domain II. Positions 150 to 155 (VADAME) are flexible linker. Residues 156 to 207 (VESPIVSDTYDALVTLGHSESDARKLIDETLATGKKFKDTESLLTAIYQRSK) are domain III.

The protein belongs to the RuvA family. As to quaternary structure, homotetramer. Forms an RuvA(8)-RuvB(12)-Holliday junction (HJ) complex. HJ DNA is sandwiched between 2 RuvA tetramers; dsDNA enters through RuvA and exits via RuvB. An RuvB hexamer assembles on each DNA strand where it exits the tetramer. Each RuvB hexamer is contacted by two RuvA subunits (via domain III) on 2 adjacent RuvB subunits; this complex drives branch migration. In the full resolvosome a probable DNA-RuvA(4)-RuvB(12)-RuvC(2) complex forms which resolves the HJ.

It localises to the cytoplasm. Its function is as follows. The RuvA-RuvB-RuvC complex processes Holliday junction (HJ) DNA during genetic recombination and DNA repair, while the RuvA-RuvB complex plays an important role in the rescue of blocked DNA replication forks via replication fork reversal (RFR). RuvA specifically binds to HJ cruciform DNA, conferring on it an open structure. The RuvB hexamer acts as an ATP-dependent pump, pulling dsDNA into and through the RuvAB complex. HJ branch migration allows RuvC to scan DNA until it finds its consensus sequence, where it cleaves and resolves the cruciform DNA. The chain is Holliday junction branch migration complex subunit RuvA from Rhodopirellula baltica (strain DSM 10527 / NCIMB 13988 / SH1).